The chain runs to 449 residues: Chromosomal replication initiator protein DnaA (449 aa).

The domain I, interacts with DnaA modulators stretch occupies residues Met1–Leu72. The interval Leu72–Thr109 is domain II. The interval His110 to Ser326 is domain III, AAA+ region. The ATP site is built by Gly154, Gly156, Lys157, and Thr158. Residues Thr327 to Gly449 are domain IV, binds dsDNA.

It belongs to the DnaA family. Oligomerizes as a right-handed, spiral filament on DNA at oriC.

The protein localises to the cytoplasm. Its function is as follows. Plays an essential role in the initiation and regulation of chromosomal replication. ATP-DnaA binds to the origin of replication (oriC) to initiate formation of the DNA replication initiation complex once per cell cycle. Binds the DnaA box (a 9 base pair repeat at the origin) and separates the double-stranded (ds)DNA. Forms a right-handed helical filament on oriC DNA; dsDNA binds to the exterior of the filament while single-stranded (ss)DNA is stabiized in the filament's interior. The ATP-DnaA-oriC complex binds and stabilizes one strand of the AT-rich DNA unwinding element (DUE), permitting loading of DNA polymerase. After initiation quickly degrades to an ADP-DnaA complex that is not apt for DNA replication. Binds acidic phospholipids. This Lacticaseibacillus paracasei (strain ATCC 334 / BCRC 17002 / CCUG 31169 / CIP 107868 / KCTC 3260 / NRRL B-441) (Lactobacillus paracasei) protein is Chromosomal replication initiator protein DnaA.